The chain runs to 346 residues: tRNA N6-adenosine threonylcarbamoyltransferase (346 aa).

Positions 111 and 115 each coordinate Fe cation. Substrate contacts are provided by residues 134–138 (LVSGG), D167, G180, and N279. D307 lines the Fe cation pocket.

This sequence belongs to the KAE1 / TsaD family. Fe(2+) is required as a cofactor.

It is found in the cytoplasm. The catalysed reaction is L-threonylcarbamoyladenylate + adenosine(37) in tRNA = N(6)-L-threonylcarbamoyladenosine(37) in tRNA + AMP + H(+). Required for the formation of a threonylcarbamoyl group on adenosine at position 37 (t(6)A37) in tRNAs that read codons beginning with adenine. Is involved in the transfer of the threonylcarbamoyl moiety of threonylcarbamoyl-AMP (TC-AMP) to the N6 group of A37, together with TsaE and TsaB. TsaD likely plays a direct catalytic role in this reaction. The sequence is that of tRNA N6-adenosine threonylcarbamoyltransferase from Burkholderia ambifaria (strain ATCC BAA-244 / DSM 16087 / CCUG 44356 / LMG 19182 / AMMD) (Burkholderia cepacia (strain AMMD)).